Consider the following 92-residue polypeptide: UPF0728 protein C10orf53 homolog (92 aa).

The protein belongs to the UPF0728 family.

The chain is UPF0728 protein C10orf53 homolog from Danio rerio (Zebrafish).